Consider the following 302-residue polypeptide: Putative S-adenosyl-L-methionine-dependent methyltransferase MAB_4586c (302 aa).

S-adenosyl-L-methionine is bound by residues aspartate 122 and 151 to 152 (DL).

This sequence belongs to the UPF0677 family.

Its function is as follows. Exhibits S-adenosyl-L-methionine-dependent methyltransferase activity. The protein is Putative S-adenosyl-L-methionine-dependent methyltransferase MAB_4586c of Mycobacteroides abscessus (strain ATCC 19977 / DSM 44196 / CCUG 20993 / CIP 104536 / JCM 13569 / NCTC 13031 / TMC 1543 / L948) (Mycobacterium abscessus).